We begin with the raw amino-acid sequence, 2164 residues long: Genome polyprotein (2164 aa).

G2 carries N-myristoyl glycine; by host lipidation. Residues 2-1477 lie on the Cytoplasmic side of the membrane; it reads GAQVSRQNVG…DLGIANMTIG (1476 aa). Residues 208-239 are disordered; sequence NVSVGYNHTHPGEQGREVVPSRTSSDNKRPSD. Residues 572–588 form an amphipathic alpha-helix region; sequence LTQNPVENYIDSVLNEV. Active-site for protease 2A activity residues include H884 and D901. Residues C918 and C920 each coordinate Zn(2+). The active-site For protease 2A activity is the C972. Positions 978 and 980 each coordinate Zn(2+). The membrane-binding stretch occupies residues 1104 to 1173; that stretch reads SDSWLKKFTE…TIRLAPASVQ (70 aa). Residues 1104-1237 are oligomerization; sequence SDSWLKKFTE…SPGTGKSLAT (134 aa). The interval 1125–1129 is RNA-binding; it reads GQKIS. Residues 1197–1357 form the SF3 helicase domain; the sequence is EARRIKNLYI…KEYLLDGKLD (161 aa). 1227-1234 is a binding site for ATP; sequence GSPGTGKS. Positions 1365, 1376, and 1381 each coordinate Zn(2+). Residues 1365–1381 form a C4-type; degenerate zinc finger; that stretch reads CDVNIKIGNAKCCPFIC. The tract at residues 1408-1415 is RNA-binding; the sequence is EDRRRSSA. Residues 1419–1424 are oligomerization; it reads MEAIFQ. An intramembrane segment occupies 1478 to 1493; that stretch reads IIANVVSIVGVIYIIY. At 1494-2164 the chain is on the cytoplasmic side; that stretch reads KLFCTLQGPY…VLEHEWYEKF (671 aa). Y1503 bears the O-(5'-phospho-RNA)-tyrosine mark. The Peptidase C3 domain maps to 1522-1700; sequence GPEEEFGRSL…FSAMLLKSYF (179 aa). Residues H1561, E1592, and C1668 each act as for protease 3C activity in the active site. Residues 1932–2045 form the RdRp catalytic domain; sequence ECLMAFDYSN…SYNFKLDMAV (114 aa). Positions 1938 and 2031 each coordinate Mg(2+).

This sequence belongs to the picornaviruses polyprotein family. Interacts with capsid protein VP1 and capsid protein VP3 to form heterotrimeric protomers. As to quaternary structure, interacts with capsid protein VP0, and capsid protein VP3 to form heterotrimeric protomers. Five protomers subsequently associate to form pentamers which serve as building blocks for the capsid. Interacts with capsid protein VP2, capsid protein VP3 and capsid protein VP4 following cleavage of capsid protein VP0. In terms of assembly, interacts with capsid protein VP1 and capsid protein VP3 in the mature capsid. Interacts with capsid protein VP0 and capsid protein VP1 to form heterotrimeric protomers. Five protomers subsequently associate to form pentamers which serve as building blocks for the capsid. Interacts with capsid protein VP4 in the mature capsid. Interacts with protein 2C; this interaction may be important for virion morphogenesis. As to quaternary structure, interacts with capsid protein VP1 and capsid protein VP3. In terms of assembly, homodimer. Homohexamer; forms a hexameric ring structure with 6-fold symmetry characteristic of AAA+ ATPases. Interacts (via N-terminus) with host RTN3 (via reticulon domain); this interaction is important for viral replication. Interacts with capsid protein VP3; this interaction may be important for virion morphogenesis. As to quaternary structure, interacts with protein 3CD. In terms of assembly, homodimer. Interacts with host GBF1. Interacts (via GOLD domain) with host ACBD3 (via GOLD domain); this interaction allows the formation of a viral protein 3A/ACBD3 heterotetramer with a 2:2 stoichiometry, which will stimulate the recruitment of host PI4KB in order to synthesize PI4P at the viral RNA replication sites. Interacts with RNA-directed RNA polymerase. As to quaternary structure, interacts with protein 3AB and with RNA-directed RNA polymerase. In terms of assembly, interacts with Viral protein genome-linked and with protein 3CD. The cofactor is Mg(2+). Post-translationally, specific enzymatic cleavages in vivo by the viral proteases yield processing intermediates and the mature proteins. Myristoylation is required for the formation of pentamers during virus assembly. Further assembly of 12 pentamers and a molecule of genomic RNA generates the provirion. In terms of processing, during virion maturation, immature virions are rendered infectious following cleavage of VP0 into VP4 and VP2. This maturation seems to be an autocatalytic event triggered by the presence of RNA in the capsid and it is followed by a conformational change infectious virion. Post-translationally, myristoylation is required during RNA encapsidation and formation of the mature virus particle. VPg is uridylylated by the polymerase into VPg-pUpU. This acts as a nucleotide-peptide primer for the genomic RNA replication.

It localises to the virion. The protein resides in the host cytoplasm. The protein localises to the host cytoplasmic vesicle membrane. It is found in the host nucleus. It catalyses the reaction a ribonucleoside 5'-triphosphate + H2O = a ribonucleoside 5'-diphosphate + phosphate + H(+). The catalysed reaction is Selective cleavage of Tyr-|-Gly bond in the picornavirus polyprotein.. It carries out the reaction RNA(n) + a ribonucleoside 5'-triphosphate = RNA(n+1) + diphosphate. The enzyme catalyses Selective cleavage of Gln-|-Gly bond in the poliovirus polyprotein. In other picornavirus reactions Glu may be substituted for Gln, and Ser or Thr for Gly.. With respect to regulation, replication or transcription is subject to high level of random mutations by the nucleotide analog ribavirin. In terms of biological role, forms an icosahedral capsid of pseudo T=3 symmetry with capsid proteins VP2 and VP3. The capsid is 300 Angstroms in diameter, composed of 60 copies of each capsid protein and enclosing the viral positive strand RNA genome. Capsid protein VP1 mainly forms the vertices of the capsid. Capsid protein VP1 interacts with host cell receptor to provide virion attachment to target host cells. This attachment induces virion internalization. Tyrosine kinases are probably involved in the entry process. After binding to its receptor, the capsid undergoes conformational changes. Capsid protein VP1 N-terminus (that contains an amphipathic alpha-helix) and capsid protein VP4 are externalized. Together, they shape a pore in the host membrane through which viral genome is translocated to host cell cytoplasm. Functionally, forms an icosahedral capsid of pseudo T=3 symmetry with capsid proteins VP2 and VP3. The capsid is 300 Angstroms in diameter, composed of 60 copies of each capsid protein and enclosing the viral positive strand RNA genome. Its function is as follows. Lies on the inner surface of the capsid shell. After binding to the host receptor, the capsid undergoes conformational changes. Capsid protein VP4 is released, Capsid protein VP1 N-terminus is externalized, and together, they shape a pore in the host membrane through which the viral genome is translocated into the host cell cytoplasm. Component of immature procapsids, which is cleaved into capsid proteins VP4 and VP2 after maturation. Allows the capsid to remain inactive before the maturation step. In terms of biological role, cysteine protease that cleaves viral polyprotein and specific host proteins. It is responsible for the autocatalytic cleavage between the P1 and P2 regions, which is the first cleavage occurring in the polyprotein. Also cleaves the host translation initiation factor EIF4G1, in order to shut down the capped cellular mRNA translation. Inhibits the host nucleus-cytoplasm protein and RNA trafficking by cleaving host members of the nuclear pores. Counteracts stress granule formation probably by antagonizing its assembly or promoting its dissassembly. Functionally, plays an essential role in the virus replication cycle by acting as a viroporin. Creates a pore in the host endoplasmic reticulum and as a consequence releases Ca2+ in the cytoplasm of infected cell. In turn, high levels of cytoplasmic calcium may trigger membrane trafficking and transport of viral ER-associated proteins to viroplasms, sites of viral genome replication. Its function is as follows. Induces and associates with structural rearrangements of intracellular membranes. Displays RNA-binding, nucleotide binding and NTPase activities. May play a role in virion morphogenesis and viral RNA encapsidation by interacting with the capsid protein VP3. Localizes the viral replication complex to the surface of membranous vesicles. Together with protein 3CD binds the Cis-Active RNA Element (CRE) which is involved in RNA synthesis initiation. Acts as a cofactor to stimulate the activity of 3D polymerase, maybe through a nucleid acid chaperone activity. In terms of biological role, localizes the viral replication complex to the surface of membranous vesicles. It inhibits host cell endoplasmic reticulum-to-Golgi apparatus transport and causes the disassembly of the Golgi complex, possibly through GBF1 interaction. This would result in depletion of MHC, trail receptors and IFN receptors at the host cell surface. Plays an essential role in viral RNA replication by recruiting ACBD3 and PI4KB at the viral replication sites, thereby allowing the formation of the rearranged membranous structures where viral replication takes place. Functionally, acts as a primer for viral RNA replication and remains covalently bound to viral genomic RNA. VPg is uridylylated prior to priming replication into VPg-pUpU. The oriI viral genomic sequence may act as a template for this. The VPg-pUpU is then used as primer on the genomic RNA poly(A) by the RNA-dependent RNA polymerase to replicate the viral genome. During genome replication, the VPg-RNA linkage is removed by the host TDP2, thereby accelerating replication. During the late stage of the replication cycle, host TDP2 is excluded from sites of viral RNA synthesis and encapsidation, allowing for the generation of progeny virions. Its function is as follows. Involved in the viral replication complex and viral polypeptide maturation. It exhibits protease activity with a specificity and catalytic efficiency that is different from protease 3C. Protein 3CD lacks polymerase activity. Protein 3CD binds to the 5'UTR of the viral genome. Replicates the viral genomic RNA on the surface of intracellular membranes. May form linear arrays of subunits that propagate along a strong head-to-tail interaction called interface-I. Covalently attaches UMP to a tyrosine of VPg, which is used to prime RNA synthesis. The positive stranded RNA genome is first replicated at virus induced membranous vesicles, creating a dsRNA genomic replication form. This dsRNA is then used as template to synthesize positive stranded RNA genomes. ss(+)RNA genomes are either translated, replicated or encapsidated. In terms of biological role, major viral protease that mediates proteolytic processing of the polyprotein. Cleaves host EIF5B, contributing to host translation shutoff. Also cleaves host PABPC1, contributing to host translation shutoff. Cleaves host NLRP1, triggers host N-glycine-mediated degradation of the autoinhibitory NLRP1 N-terminal fragment. This chain is Genome polyprotein, found in Human rhinovirus A serotype 89 (strain 41467-Gallo) (HRV-89).